A 307-amino-acid polypeptide reads, in one-letter code: Dihydroorotate dehydrogenase A (fumarate) (307 aa).

FMN is bound by residues S21 and 46-47; that span reads KT. Substrate contacts are provided by residues K46, 70-74, and N130; that span reads NSVGL. Residue N130 coordinates FMN. The active-site Nucleophile is C133. Residues K168 and I194 each coordinate FMN. A substrate-binding site is contributed by 195 to 196; the sequence is NT. FMN-binding positions include G220, 246–247, and 268–269; these read GG and GS.

This sequence belongs to the dihydroorotate dehydrogenase family. Type 1 subfamily. Homodimer. Requires FMN as cofactor.

It is found in the cytoplasm. The enzyme catalyses (S)-dihydroorotate + fumarate = orotate + succinate. The protein operates within pyrimidine metabolism; UMP biosynthesis via de novo pathway. Its function is as follows. Catalyzes the conversion of dihydroorotate to orotate with fumarate as the electron acceptor. The chain is Dihydroorotate dehydrogenase A (fumarate) (pyrD) from Lactobacillus delbrueckii subsp. bulgaricus (strain ATCC BAA-365 / Lb-18).